Here is a 461-residue protein sequence, read N- to C-terminus: Photosystem II CP43 reaction center protein (461 aa).

At 1–48 (MVTLSSNSIFATNRDQESSGFAWWAGNARLINLSGKLLGAHVAHAGLI) the chain is on the cytoplasmic side. A helical transmembrane segment spans residues 49 to 71 (VFWAGAMTLFELAHFIPEKPMYE). Residues 72–111 (QGLILIPHIATLGWGVGPGGEVVDTFPFFVVGVVHLISSA) lie on the Lumenal side of the membrane. The helical transmembrane segment at 112–133 (VLGFGGVYHAIRGPETLEEYSS) threads the bilayer. The Cytoplasmic segment spans residues 134–155 (FFGYDWKDKNKMTTILGFHLIV). A helical membrane pass occupies residues 156-178 (LGIGALLLVAKAMFFGGLYDTWA). Over 179–232 (PGGGDVRVITNPTLDPRVIFGYLLKSPFGGEGWIVSVNNLEDVVGGHIWIGLIC) the chain is Lumenal. Residues 233 to 253 (IAGGIWHILTTPFGWARRAFI) form a helical membrane-spanning segment. At 254–268 (WSGEAYLSYSLGALS) the chain is on the cytoplasmic side. A helical transmembrane segment spans residues 269–289 (MMGFIATCFVWFNNTVYPSEF). Residues 290–424 (YGPTGPEASQ…ATSHFVLAFF (135 aa)) lie on the Lumenal side of the membrane. Glutamate 355 contributes to the [CaMn4O5] cluster binding site. A helical transmembrane segment spans residues 425-449 (FLVGHLWHAGRARAAAAGFEKGIDR). Residues 450–461 (ESEPVLSMPSLD) lie on the Cytoplasmic side of the membrane.

As to quaternary structure, PSII is composed of 1 copy each of membrane proteins PsbA, PsbB, PsbC, PsbD, PsbE, PsbF, PsbH, PsbI, PsbJ, PsbK, PsbL, PsbM, PsbT, PsbX, PsbY, PsbZ, Psb30/Ycf12, peripheral proteins PsbO, CyanoQ (PsbQ), PsbU, PsbV and a large number of cofactors. It forms dimeric complexes. Part of a photosystem II (PSII) assembly intermediate complex PSII-I; crystallized from a strain deleted of psbJ, it forms monomeric PSII before addition of the oxygen evolving complex. PSII-I includes 3 assembly factors not found in mature PSII (Psb27, Psb28 and Psb34), and CP43 (this protein) is not in its mature conformation. Requires Binds multiple chlorophylls and provides some of the ligands for the Ca-4Mn-5O cluster of the oxygen-evolving complex. It may also provide a ligand for a Cl- that is required for oxygen evolution. PSII binds additional chlorophylls, carotenoids and specific lipids. as cofactor.

It localises to the cellular thylakoid membrane. Functionally, one of the components of the core complex of photosystem II (PSII). It binds chlorophyll and helps catalyze the primary light-induced photochemical processes of PSII. PSII is a light-driven water:plastoquinone oxidoreductase, using light energy to abstract electrons from H(2)O, generating O(2) and a proton gradient subsequently used for ATP formation. This chain is Photosystem II CP43 reaction center protein, found in Thermosynechococcus vestitus (strain NIES-2133 / IAM M-273 / BP-1).